We begin with the raw amino-acid sequence, 405 residues long: Magnesium-protoporphyrin IX monomethyl ester [oxidative] cyclase, chloroplastic (405 aa).

Residues Met1–Lys43 constitute a chloroplast transit peptide.

The protein belongs to the AcsF family. Fe cation serves as cofactor.

It localises to the plastid. It is found in the chloroplast. The catalysed reaction is Mg-protoporphyrin IX 13-monomethyl ester + 3 NADPH + 3 O2 + 2 H(+) = 3,8-divinyl protochlorophyllide a + 3 NADP(+) + 5 H2O. It functions in the pathway porphyrin-containing compound metabolism; chlorophyll biosynthesis. In terms of biological role, catalyzes the formation of the isocyclic ring in chlorophyll biosynthesis. Mediates the cyclase reaction, which results in the formation of divinylprotochlorophyllide (Pchlide) characteristic of all chlorophylls from magnesium-protoporphyrin IX 13-monomethyl ester (MgPMME). The sequence is that of Magnesium-protoporphyrin IX monomethyl ester [oxidative] cyclase, chloroplastic (CRD1) from Gossypium hirsutum (Upland cotton).